Consider the following 307-residue polypeptide: Putative gluconeogenesis factor (307 aa).

The protein belongs to the gluconeogenesis factor family.

Its subcellular location is the cytoplasm. Functionally, required for morphogenesis under gluconeogenic growth conditions. The polypeptide is Putative gluconeogenesis factor (Yersinia pestis).